Reading from the N-terminus, the 243-residue chain is 4-hydroxy-tetrahydrodipicolinate reductase (243 aa).

NAD(+) is bound by residues 9 to 14 (GANGKM), 78 to 80 (GTS), and 104 to 107 (APNF). The Proton donor/acceptor role is filled by H134. Residue H135 participates in (S)-2,3,4,5-tetrahydrodipicolinate binding. K138 functions as the Proton donor in the catalytic mechanism. 144 to 145 (GT) serves as a coordination point for (S)-2,3,4,5-tetrahydrodipicolinate.

Belongs to the DapB family.

It localises to the cytoplasm. The catalysed reaction is (S)-2,3,4,5-tetrahydrodipicolinate + NAD(+) + H2O = (2S,4S)-4-hydroxy-2,3,4,5-tetrahydrodipicolinate + NADH + H(+). It catalyses the reaction (S)-2,3,4,5-tetrahydrodipicolinate + NADP(+) + H2O = (2S,4S)-4-hydroxy-2,3,4,5-tetrahydrodipicolinate + NADPH + H(+). Its pathway is amino-acid biosynthesis; L-lysine biosynthesis via DAP pathway; (S)-tetrahydrodipicolinate from L-aspartate: step 4/4. In terms of biological role, catalyzes the conversion of 4-hydroxy-tetrahydrodipicolinate (HTPA) to tetrahydrodipicolinate. This Legionella pneumophila (strain Paris) protein is 4-hydroxy-tetrahydrodipicolinate reductase.